A 189-amino-acid polypeptide reads, in one-letter code: Large ribosomal subunit protein eL20 (189 aa).

It belongs to the eukaryotic ribosomal protein eL20 family.

It localises to the cytoplasm. This is Large ribosomal subunit protein eL20 (RPL18A) from Tetrahymena thermophila.